We begin with the raw amino-acid sequence, 716 residues long: 1,4-alpha-glucan branching enzyme GlgB (716 aa).

The Nucleophile role is filled by D394. The Proton donor role is filled by E447.

It belongs to the glycosyl hydrolase 13 family. GlgB subfamily. Monomer.

It catalyses the reaction Transfers a segment of a (1-&gt;4)-alpha-D-glucan chain to a primary hydroxy group in a similar glucan chain.. It functions in the pathway glycan biosynthesis; glycogen biosynthesis. Functionally, catalyzes the formation of the alpha-1,6-glucosidic linkages in glycogen by scission of a 1,4-alpha-linked oligosaccharide from growing alpha-1,4-glucan chains and the subsequent attachment of the oligosaccharide to the alpha-1,6 position. The sequence is that of 1,4-alpha-glucan branching enzyme GlgB from Photobacterium profundum (strain SS9).